The sequence spans 90 residues: Small ribosomal subunit protein bS20 (90 aa).

It belongs to the bacterial ribosomal protein bS20 family.

In terms of biological role, binds directly to 16S ribosomal RNA. The sequence is that of Small ribosomal subunit protein bS20 from Acidiphilium cryptum (strain JF-5).